Reading from the N-terminus, the 327-residue chain is Beta-ketoacyl-[acyl-carrier-protein] synthase III (327 aa).

Residues C112 and H253 contribute to the active site. The tract at residues 254 to 258 (QANER) is ACP-binding. N283 is a catalytic residue.

It belongs to the thiolase-like superfamily. FabH family. As to quaternary structure, homodimer.

Its subcellular location is the cytoplasm. The enzyme catalyses malonyl-[ACP] + acetyl-CoA + H(+) = 3-oxobutanoyl-[ACP] + CO2 + CoA. Its pathway is lipid metabolism; fatty acid biosynthesis. Its function is as follows. Catalyzes the condensation reaction of fatty acid synthesis by the addition to an acyl acceptor of two carbons from malonyl-ACP. Catalyzes the first condensation reaction which initiates fatty acid synthesis and may therefore play a role in governing the total rate of fatty acid production. Possesses both acetoacetyl-ACP synthase and acetyl transacylase activities. Its substrate specificity determines the biosynthesis of branched-chain and/or straight-chain of fatty acids. The polypeptide is Beta-ketoacyl-[acyl-carrier-protein] synthase III (Chlamydia trachomatis serovar A (strain ATCC VR-571B / DSM 19440 / HAR-13)).